The sequence spans 550 residues: Retron Ec78 probable ATPase (550 aa).

The ATP-binding motif lies at 93 to 100 (GNNGKGKT).

Its function is as follows. Probable ATPase component of antiviral defense system retron Ec78, composed of a non-coding RNA (ncRNA), a reverse transcriptase (RT), this protein and a putative HNH endonuclease. Expression of retron Ec78 confers protection against bacteriophage T5. At multiplicity of infection (MOI) of 0.02 cultures slow growth when infected with T5 but do not collapse, at MOI 2 cultures enter growth stasis. In Escherichia coli, this protein is Retron Ec78 probable ATPase.